Reading from the N-terminus, the 95-residue chain is MKTLVLVAVLGLASLYLLSYASEVQQLSVAEEEFGALIDAFGGLLETEERGVNKEGCRKFLGGCENTGQCCLHLFCKYDTPFNHFCAWDLSFGRK.

Residues 1–21 (MKTLVLVAVLGLASLYLLSYA) form the signal peptide. Positions 22–50 (SEVQQLSVAEEEFGALIDAFGGLLETEER) are excised as a propeptide. 3 disulfide bridges follow: C57/C71, C64/C76, and C70/C86.

It belongs to the neurotoxin 10 (Hwtx-1) family. 26 (ICK-1) subfamily. In terms of tissue distribution, expressed by the venom gland.

Its subcellular location is the secreted. Its function is as follows. Ion channel inhibitor. The protein is U8-barytoxin-Tl1a of Trittame loki (Brush-footed trapdoor spider).